We begin with the raw amino-acid sequence, 128 residues long: Large ribosomal subunit protein uL22 (128 aa).

This sequence belongs to the universal ribosomal protein uL22 family. As to quaternary structure, part of the 50S ribosomal subunit.

In terms of biological role, this protein binds specifically to 23S rRNA; its binding is stimulated by other ribosomal proteins, e.g. L4, L17, and L20. It is important during the early stages of 50S assembly. It makes multiple contacts with different domains of the 23S rRNA in the assembled 50S subunit and ribosome. The globular domain of the protein is located near the polypeptide exit tunnel on the outside of the subunit, while an extended beta-hairpin is found that lines the wall of the exit tunnel in the center of the 70S ribosome. This chain is Large ribosomal subunit protein uL22, found in Prochlorococcus marinus (strain MIT 9515).